The sequence spans 430 residues: Small ribosomal subunit protein uS3m (430 aa).

This sequence belongs to the universal ribosomal protein uS3 family.

It localises to the mitochondrion. In Marchantia polymorpha (Common liverwort), this protein is Small ribosomal subunit protein uS3m (RPS3).